The following is a 249-amino-acid chain: Glucosamine-6-phosphate deaminase (249 aa).

Asp-67 functions as the Proton acceptor; for enolization step in the catalytic mechanism. Catalysis depends on Asn-136, which acts as the For ring-opening step. Catalysis depends on His-138, which acts as the Proton acceptor; for ring-opening step. The active-site For ring-opening step is Glu-143.

It belongs to the glucosamine/galactosamine-6-phosphate isomerase family. NagB subfamily.

The catalysed reaction is alpha-D-glucosamine 6-phosphate + H2O = beta-D-fructose 6-phosphate + NH4(+). It participates in amino-sugar metabolism; N-acetylneuraminate degradation; D-fructose 6-phosphate from N-acetylneuraminate: step 5/5. Functionally, catalyzes the reversible isomerization-deamination of glucosamine 6-phosphate (GlcN6P) to form fructose 6-phosphate (Fru6P) and ammonium ion. The polypeptide is Glucosamine-6-phosphate deaminase (Clostridium botulinum (strain Alaska E43 / Type E3)).